Here is a 40-residue protein sequence, read N- to C-terminus: Dolichyl-diphosphooligosaccharide--protein glycosyltransferase subunit 4 (40 aa).

The Lumenal segment spans residues 1 to 4; that stretch reads MITD. The chain crosses the membrane as a helical span at residues 5–25; sequence VQLAIFSNVLGVFLFLLVVAY. Residues 26–40 are Cytoplasmic-facing; that stretch reads HYINANTGKSSIKNK.

Belongs to the OST4 family. As to quaternary structure, component of the oligosaccharyltransferase (OST) complex.

It localises to the endoplasmic reticulum membrane. Functionally, subunit of the oligosaccharyl transferase (OST) complex that catalyzes the initial transfer of a defined glycan (Glc(3)Man(9)GlcNAc(2) in eukaryotes) from the lipid carrier dolichol-pyrophosphate to an asparagine residue within an Asn-X-Ser/Thr consensus motif in nascent polypeptide chains, the first step in protein N-glycosylation. N-glycosylation occurs cotranslationally and the complex associates with the Sec61 complex at the channel-forming translocon complex that mediates protein translocation across the endoplasmic reticulum (ER). All subunits are required for a maximal enzyme activity. The protein is Dolichyl-diphosphooligosaccharide--protein glycosyltransferase subunit 4 of Drosophila mojavensis (Fruit fly).